Reading from the N-terminus, the 240-residue chain is Probable transcriptional regulatory protein MXAN_7062 (240 aa).

Belongs to the TACO1 family.

Its subcellular location is the cytoplasm. The sequence is that of Probable transcriptional regulatory protein MXAN_7062 from Myxococcus xanthus (strain DK1622).